The chain runs to 128 residues: Small ribosomal subunit protein uS9 (128 aa).

The segment at 106 to 128 (SRKVERKKPGRPKARKKFQFSKR) is disordered. A compositionally biased stretch (basic residues) spans 109–128 (VERKKPGRPKARKKFQFSKR).

Belongs to the universal ribosomal protein uS9 family.

The sequence is that of Small ribosomal subunit protein uS9 from Azobacteroides pseudotrichonymphae genomovar. CFP2.